A 302-amino-acid chain; its full sequence is N-acetylmuramic acid 6-phosphate etherase (302 aa).

The SIS domain occupies 57-220 (VSEKLKNNGR…TTAVMIKLGK (164 aa)). Residue E85 is the Proton donor of the active site. E116 is a catalytic residue.

The protein belongs to the GCKR-like family. MurNAc-6-P etherase subfamily. In terms of assembly, homodimer.

The catalysed reaction is N-acetyl-D-muramate 6-phosphate + H2O = N-acetyl-D-glucosamine 6-phosphate + (R)-lactate. Its pathway is amino-sugar metabolism; N-acetylmuramate degradation. Functionally, specifically catalyzes the cleavage of the D-lactyl ether substituent of MurNAc 6-phosphate, producing GlcNAc 6-phosphate and D-lactate. This chain is N-acetylmuramic acid 6-phosphate etherase, found in Clostridium acetobutylicum (strain ATCC 824 / DSM 792 / JCM 1419 / IAM 19013 / LMG 5710 / NBRC 13948 / NRRL B-527 / VKM B-1787 / 2291 / W).